Here is a 638-residue protein sequence, read N- to C-terminus: LIM domain kinase 2 (638 aa).

LIM zinc-binding domains follow at residues 12-63 and 72-124; these read CRGC…CHKD and CHGC…CGKC. The PDZ domain occupies 152–239; the sequence is LISMPATTEC…TLQLLIEHDP (88 aa). A Phosphothreonine modification is found at Thr-210. Positions 257–266 are enriched in polar residues; the sequence is MQSSGHTLML. Positions 257 to 304 are disordered; that stretch reads MQSSGHTLMLSTLDAKENQEGTLRRRSLRRSNSISKSPGPSSPKEPLL. Positions 270 to 279 are enriched in basic and acidic residues; it reads DAKENQEGTL. Low complexity predominate over residues 286-304; that stretch reads RSNSISKSPGPSSPKEPLL. A phosphoserine mark is found at Ser-293 and Ser-298. The Protein kinase domain occupies 331–608; the sequence is LIHGEVLGKG…DSFEALSLFL (278 aa). ATP contacts are provided by residues 337–345 and Lys-360; that span reads LGKGFFGQA. Residue Asp-451 is part of the active site. Thr-505 is modified (phosphothreonine; by ROCK1 and CDC42BP).

It belongs to the protein kinase superfamily. TKL Ser/Thr protein kinase family. In terms of assembly, binds ROCK1 and MARF1. Interacts with NISCH. In terms of processing, phosphorylated on serine and/or threonine residues by ROCK1. Found in various tissues at moderate levels, except for testis, which shows very low expression.

It localises to the cytoplasm. Its subcellular location is the nucleus. The protein resides in the perinuclear region. The protein localises to the cytoskeleton. It is found in the spindle. It localises to the microtubule organizing center. Its subcellular location is the centrosome. It carries out the reaction L-seryl-[protein] + ATP = O-phospho-L-seryl-[protein] + ADP + H(+). The enzyme catalyses L-threonyl-[protein] + ATP = O-phospho-L-threonyl-[protein] + ADP + H(+). In terms of biological role, serine/threonine-protein kinase that plays an essential role in the regulation of actin filament dynamics. Acts downstream of several Rho family GTPase signal transduction pathways. Involved in astral microtubule organization and mitotic spindle orientation during early stages of mitosis by mediating phosphorylation of TPPP. Displays serine/threonine-specific phosphorylation of myelin basic protein and histone (MBP) in vitro. Suppresses ciliogenesis via multiple pathways; phosphorylation of CFL1, directional trafficking of ciliary vesicles to the ciliary base, and by facilitating YAP1 nuclear localization where it acts as a transcriptional corepressor of the TEAD4 target genes AURKA and PLK1. In Rattus norvegicus (Rat), this protein is LIM domain kinase 2 (Limk2).